The following is a 281-amino-acid chain: Bifunctional protein FolD (281 aa).

NADP(+) contacts are provided by residues 165 to 167, Thr192, and Val233; that span reads GRG.

This sequence belongs to the tetrahydrofolate dehydrogenase/cyclohydrolase family. As to quaternary structure, homodimer.

It carries out the reaction (6R)-5,10-methylene-5,6,7,8-tetrahydrofolate + NADP(+) = (6R)-5,10-methenyltetrahydrofolate + NADPH. The enzyme catalyses (6R)-5,10-methenyltetrahydrofolate + H2O = (6R)-10-formyltetrahydrofolate + H(+). It participates in one-carbon metabolism; tetrahydrofolate interconversion. Catalyzes the oxidation of 5,10-methylenetetrahydrofolate to 5,10-methenyltetrahydrofolate and then the hydrolysis of 5,10-methenyltetrahydrofolate to 10-formyltetrahydrofolate. The chain is Bifunctional protein FolD from Mycobacterium bovis (strain BCG / Tokyo 172 / ATCC 35737 / TMC 1019).